The chain runs to 892 residues: Transmembrane channel-like protein 2-B (892 aa).

The interval 29–125 (GINQNLRREE…DESMSEGEMA (97 aa)) is disordered. Composition is skewed to basic residues over residues 48–58 (RRAKKRRMNRR) and 66–77 (RSKKMRMRVRKN). Residues 103 to 112 (PSSCSSSSDN) are compositionally biased toward low complexity. 9 helical membrane passes run 235-255 (LVLF…MGIP), 275-295 (FSVL…YGFY), 308-328 (LPLS…MVVI), 403-423 (LANV…YAVV), 444-464 (EVEI…EAIA), 482-502 (IFAL…DEVN), 616-636 (LIFN…LVGI), 671-691 (FYMG…IYSI), and 736-756 (GLII…LNAV). Basic and acidic residues predominate over residues 772-785 (QMQRDEEKNRRNNK). 2 disordered regions span residues 772–791 (QMQR…TNQV) and 796–892 (EDLL…PPRR). The segment covering 862–878 (PRQPGPLPGNPRGPPPG) has biased composition (pro residues).

It belongs to the TMC family. In terms of tissue distribution, in adults, expression is restricted to the hair cells of inner ear and lateral line organ. Expressed at higher levels in the larval lateral-line neuromasts than in the larval inner ear.

It is found in the membrane. In terms of biological role, probable component of the mechanotransducer (MET) non-selective cation channel. This is Transmembrane channel-like protein 2-B from Danio rerio (Zebrafish).